Reading from the N-terminus, the 351-residue chain is Histidinol-phosphate aminotransferase (351 aa).

Residue lysine 221 is modified to N6-(pyridoxal phosphate)lysine.

This sequence belongs to the class-II pyridoxal-phosphate-dependent aminotransferase family. Histidinol-phosphate aminotransferase subfamily. In terms of assembly, homodimer. The cofactor is pyridoxal 5'-phosphate.

It carries out the reaction L-histidinol phosphate + 2-oxoglutarate = 3-(imidazol-4-yl)-2-oxopropyl phosphate + L-glutamate. The protein operates within amino-acid biosynthesis; L-histidine biosynthesis; L-histidine from 5-phospho-alpha-D-ribose 1-diphosphate: step 7/9. This Staphylococcus saprophyticus subsp. saprophyticus (strain ATCC 15305 / DSM 20229 / NCIMB 8711 / NCTC 7292 / S-41) protein is Histidinol-phosphate aminotransferase.